The chain runs to 38 residues: Photosystem II reaction center protein X (38 aa).

The helical transmembrane segment at 9–29 (IASLTAGALVLSAIGIALIII) threads the bilayer.

The protein belongs to the PsbX family. Type 1 subfamily. As to quaternary structure, PSII is composed of 1 copy each of membrane proteins PsbA, PsbB, PsbC, PsbD, PsbE, PsbF, PsbH, PsbI, PsbJ, PsbK, PsbL, PsbM, PsbT, PsbX, PsbY, PsbZ, Psb30/Ycf12, at least 3 peripheral proteins of the oxygen-evolving complex and a large number of cofactors. It forms dimeric complexes.

It is found in the plastid. It localises to the chloroplast thylakoid membrane. Functionally, involved in the binding and/or turnover of quinones at the Q(B) site of photosystem II (PSII). PSII is a light-driven water plastoquinone oxidoreductase, using light energy to abstract electrons from H(2)O, generating a proton gradient subsequently used for ATP formation. The protein is Photosystem II reaction center protein X of Thalassiosira pseudonana (Marine diatom).